The primary structure comprises 184 residues: Ribosome-recycling factor (184 aa).

It belongs to the RRF family.

Its subcellular location is the cytoplasm. Its function is as follows. Responsible for the release of ribosomes from messenger RNA at the termination of protein biosynthesis. May increase the efficiency of translation by recycling ribosomes from one round of translation to another. This Aquifex aeolicus (strain VF5) protein is Ribosome-recycling factor.